Here is a 328-residue protein sequence, read N- to C-terminus: Reticulocalbin-3 (328 aa).

Positions 1–20 are cleaved as a signal peptide; sequence MMWRWTLMLLLLLLRHWALG. The disordered stretch occupies residues 24–48; the sequence is PDAGPHGQDRVHHGTPLSEAPHDDA. EF-hand domains are found at residues 75–112, 113–148, 163–198, 200–235, 241–276, and 277–312; these read ESQARLGRIVDRMDLAGDSDGWVSLAELRAWIAHTQQR, HIRDSVSAAWHTYDTDRDGRVGWEELRNATYGHYEP, KMLARDERRFRVADQDGDSMATREELTAFLHPEEFP, MRDIVVAETLEDLDKNKDGYVQVEEYIADLYSAEPG, WVQTERQQFRDFRDLNKDGRLDGSEVGYWVLPPSQD, and QPLVEANHLLHESDTDKDGRLSKAEILSNWNMFVGS. Ca(2+) contacts are provided by Asp92, Asp94, Trp96, Glu101, Asp126, Asp128, Asp130, Arg132, and Glu137. The N-linked (GlcNAc...) asparagine glycan is linked to Asn140. Residues Asp176, Asp178, Asp180, Met182, Glu187, Asp213, Asn215, Asp217, Tyr219, Glu224, Asp254, Asn256, Asp258, Arg260, Glu265, Asp290, Asp292, Asp294, Arg296, and Glu301 each contribute to the Ca(2+) site. The short motif at 325-328 is the Prevents secretion from ER element; that stretch reads HDEL.

This sequence belongs to the CREC family. Interacts with PCSK6 (immature form including the propeptide); probably involved in the maturation and the secretion of PCSK6. N-glycosylated. Post-translationally, degraded by PCSK6 and other endoproteases including FURIN and PCSK5.

Its subcellular location is the endoplasmic reticulum lumen. Its function is as follows. Probable molecular chaperone assisting protein biosynthesis and transport in the endoplasmic reticulum. Required for the proper biosynthesis and transport of pulmonary surfactant-associated protein A/SP-A, pulmonary surfactant-associated protein D/SP-D and the lipid transporter ABCA3. By regulating both the proper expression and the degradation through the endoplasmic reticulum-associated protein degradation pathway of these proteins plays a crucial role in pulmonary surfactant homeostasis. Has an anti-fibrotic activity by negatively regulating the secretion of type I and type III collagens. This calcium-binding protein also transiently associates with immature PCSK6 and regulates its secretion. The sequence is that of Reticulocalbin-3 from Rattus norvegicus (Rat).